A 141-amino-acid polypeptide reads, in one-letter code: Ribonuclease P protein component (141 aa).

This sequence belongs to the RnpA family. Consists of a catalytic RNA component (M1 or rnpB) and a protein subunit.

The catalysed reaction is Endonucleolytic cleavage of RNA, removing 5'-extranucleotides from tRNA precursor.. RNaseP catalyzes the removal of the 5'-leader sequence from pre-tRNA to produce the mature 5'-terminus. It can also cleave other RNA substrates such as 4.5S RNA. The protein component plays an auxiliary but essential role in vivo by binding to the 5'-leader sequence and broadening the substrate specificity of the ribozyme. The polypeptide is Ribonuclease P protein component (Onion yellows phytoplasma (strain OY-M)).